The primary structure comprises 62 residues: Putative antitoxin AF_1095 (62 aa).

This sequence belongs to the UPF0165 family.

Its function is as follows. Possibly the antitoxin component of a type II toxin-antitoxin (TA) system. The chain is Putative antitoxin AF_1095 from Archaeoglobus fulgidus (strain ATCC 49558 / DSM 4304 / JCM 9628 / NBRC 100126 / VC-16).